The following is a 223-amino-acid chain: tRNA (guanine-N(7)-)-methyltransferase (223 aa).

The S-adenosyl-L-methionine site is built by D56, D81, D108, and D130. D130 is an active-site residue. Substrate contacts are provided by K134 and D166.

This sequence belongs to the class I-like SAM-binding methyltransferase superfamily. TrmB family.

The enzyme catalyses guanosine(46) in tRNA + S-adenosyl-L-methionine = N(7)-methylguanosine(46) in tRNA + S-adenosyl-L-homocysteine. It participates in tRNA modification; N(7)-methylguanine-tRNA biosynthesis. Its function is as follows. Catalyzes the formation of N(7)-methylguanine at position 46 (m7G46) in tRNA. The chain is tRNA (guanine-N(7)-)-methyltransferase from Rubrobacter xylanophilus (strain DSM 9941 / JCM 11954 / NBRC 16129 / PRD-1).